Here is a 100-residue protein sequence, read N- to C-terminus: Probable steroid-binding protein 3 (100 aa).

Met-1 is subject to N-acetylmethionine. A Cytochrome b5 heme-binding domain is found at 1 to 82; it reads MEFTAEQLSQ…LTEKEINTLN (82 aa). The sterol-binding stretch occupies residues 1–82; that stretch reads MEFTAEQLSQ…LTEKEINTLN (82 aa).

The protein belongs to the cytochrome b5 family. MAPR subfamily.

It localises to the nucleus. In Arabidopsis thaliana (Mouse-ear cress), this protein is Probable steroid-binding protein 3 (MP3).